We begin with the raw amino-acid sequence, 199 residues long: Potassium-transporting ATPase KdpC subunit (199 aa).

The chain crosses the membrane as a helical span at residues Pro7–Ile27.

The protein belongs to the KdpC family. The system is composed of three essential subunits: KdpA, KdpB and KdpC.

It is found in the cell inner membrane. Part of the high-affinity ATP-driven potassium transport (or Kdp) system, which catalyzes the hydrolysis of ATP coupled with the electrogenic transport of potassium into the cytoplasm. This subunit acts as a catalytic chaperone that increases the ATP-binding affinity of the ATP-hydrolyzing subunit KdpB by the formation of a transient KdpB/KdpC/ATP ternary complex. In Gemmatimonas aurantiaca (strain DSM 14586 / JCM 11422 / NBRC 100505 / T-27), this protein is Potassium-transporting ATPase KdpC subunit.